The sequence spans 224 residues: MNCLTVPGVHPGSPGRPRGQIQVIFGPMFSGKSTELMRRVRRFQLAQYRCLLVKYAKDTRYCTTGVSTHDRNTMEARPACALQDVYQEALGSAVIGIDEGQFFPDIVEFCEKMANTGKTVIVAALDGTFQRKAFGSILNLVPLAESVVKLNAVCMECYREASYTKRLGAEREVEVIGGADKYHSVCRACYFQKRPQQLGSENKENVPMGVKQLDMPASRKIFAS.

Position 13 is a phosphoserine (Ser-13). ATP-binding positions include 26–33, 58–60, and 98–101; these read GPMFSGKS, DTR, and DEGQ. Glu-99 serves as the catalytic Proton acceptor. Residue Phe-129 coordinates substrate. Residues Cys-154 and Cys-157 each contribute to the Zn(2+) site. Substrate-binding positions include 173–177 and Tyr-182; that span reads VEVIG. Cys-186 and Cys-189 together coordinate Zn(2+). The short motif at 203–205 is the KEN box element; that stretch reads KEN.

Belongs to the thymidine kinase family. As to quaternary structure, homotetramer. Tetramerization from dimerization is induced by ATP and increases catalytic efficiency due to a high affinity for thymidine. Tetramerization is inhibited by phosphorylation at Ser-13. Interacts (via the KEN box) with FZR1. Phosphorylated on Ser-13 in mitosis. Phosphorylation of Ser-13 by CDK1 during mitosis reduces homotetramerization and catalytic efficiency when DNA replication is complete and intracellular TK1 is still present at a high level. In terms of processing, polyubiquitinated. Postmitosis, ubiquitination leads to proteasomal degradation. The KEN box sequence located at the C-terminal region targets for degradation by the anaphase promoting complex (APC/C) activated and rate-limited by FZR1.

It is found in the cytoplasm. The enzyme catalyses thymidine + ATP = dTMP + ADP + H(+). Cell-cycle-regulated enzyme of importance in nucleotide metabolism. Catalyzes the first enzymatic step in the salvage pathway converting thymidine into thymidine monophosphate. Transcriptional regulation limits expression to the S phase of the cell cycle and transient expression coincides with the oscillation in the intracellular dTTP concentration. The sequence is that of Thymidine kinase, cytosolic (TK1) from Gallus gallus (Chicken).